Reading from the N-terminus, the 477-residue chain is Myosin-binding protein H (477 aa).

The tract at residues 1–73 (MMEKNTSEGP…APPSEDVPSA (73 aa)) is disordered. 2 positions are modified to phosphothreonine: Thr6 and Thr26. A Fibronectin type-III 1 domain is found at 73 to 168 (APLLLTLDDV…LDQPIHIREN (96 aa)). An Ig-like C2-type 1 domain is found at 172-260 (PKIRVPRHLR…EDLEAKAVID (89 aa)). Residues 269-364 (PPSSIRLLDV…TKELAHIQKA (96 aa)) form the Fibronectin type-III 2 domain. The region spanning 382–466 (PSFTQPLADH…INVLGEASVD (85 aa)) is the Ig-like C2-type 2 domain.

This sequence belongs to the immunoglobulin superfamily. MyBP family. As to expression, mainly expressed in the skeletal muscle. Slightly expressed in the left atrium and arteria mammaria interna.

Its function is as follows. Binds to myosin; probably involved in interaction with thick myofilaments in the A-band. The protein is Myosin-binding protein H (MYBPH) of Homo sapiens (Human).